We begin with the raw amino-acid sequence, 184 residues long: Oligoribonuclease (184 aa).

The 164-residue stretch at 7–170 (LIWIDLEMTG…DDIYESIEEL (164 aa)) folds into the Exonuclease domain. Tyr-128 is a catalytic residue.

It belongs to the oligoribonuclease family.

It is found in the cytoplasm. 3'-to-5' exoribonuclease specific for small oligoribonucleotides. The sequence is that of Oligoribonuclease from Hydrogenovibrio crunogenus (strain DSM 25203 / XCL-2) (Thiomicrospira crunogena).